We begin with the raw amino-acid sequence, 439 residues long: Lipoyl synthase, mitochondrial (439 aa).

The transit peptide at 1–37 (MVASARGLRTLHSAHSSISALPASTVPRLQLAVSRCY) directs the protein to the mitochondrion. [4Fe-4S] cluster-binding residues include Cys150, Cys155, Cys161, Cys181, Cys185, Cys188, and Ser396. Residues 164-385 (GSSKSAATAT…KERALEMGFL (222 aa)) form the Radical SAM core domain.

The protein belongs to the radical SAM superfamily. Lipoyl synthase family. [4Fe-4S] cluster is required as a cofactor.

The protein resides in the mitochondrion. It catalyses the reaction [[Fe-S] cluster scaffold protein carrying a second [4Fe-4S](2+) cluster] + N(6)-octanoyl-L-lysyl-[protein] + 2 oxidized [2Fe-2S]-[ferredoxin] + 2 S-adenosyl-L-methionine + 4 H(+) = [[Fe-S] cluster scaffold protein] + N(6)-[(R)-dihydrolipoyl]-L-lysyl-[protein] + 4 Fe(3+) + 2 hydrogen sulfide + 2 5'-deoxyadenosine + 2 L-methionine + 2 reduced [2Fe-2S]-[ferredoxin]. It participates in protein modification; protein lipoylation via endogenous pathway; protein N(6)-(lipoyl)lysine from octanoyl-[acyl-carrier-protein]: step 2/2. Catalyzes the radical-mediated insertion of two sulfur atoms into the C-6 and C-8 positions of the octanoyl moiety bound to the lipoyl domains of lipoate-dependent enzymes, thereby converting the octanoylated domains into lipoylated derivatives. The polypeptide is Lipoyl synthase, mitochondrial (Paracoccidioides lutzii (strain ATCC MYA-826 / Pb01) (Paracoccidioides brasiliensis)).